Consider the following 173-residue polypeptide: 5-hydroxymethyl-dUMP N-hydrolase (173 aa).

Alanine 2 carries the N-acetylalanine modification. Glycine 16 serves as a coordination point for 5-hydroxymethyl-dUMP. Residue serine 17 is modified to Phosphoserine. 5-hydroxymethyl-dUMP contacts are provided by isoleucine 18, arginine 19, glycine 20, serine 87, glycine 89, and glutamate 93. Position 87 is a phosphoserine (serine 87). Residues serine 112, serine 117, serine 127, and serine 158 each carry the phosphoserine modification. Residue serine 117 participates in 5-hydroxymethyl-dUMP binding.

Belongs to the 2'-deoxynucleoside 5'-phosphate N-hydrolase 1 family. As to quaternary structure, monomer and homodimer.

The protein resides in the cytoplasm. It is found in the nucleus. It carries out the reaction 5-hydroxymethyl-dUMP + H2O = 5-hydroxymethyluracil + 2-deoxy-D-ribose 5-phosphate. Functionally, part of a nucleotide salvage pathway that eliminates epigenetically modified 5-hydroxymethyl-dCMP (hmdCMP) in a two-step process entailing deamination to cytotoxic 5-hydroxymethyl-dUMP (hmdUMP), followed by its hydrolysis into 5-hydroxymethyluracil (hmU) and 2-deoxy-D-ribose 5-phosphate (deoxyribosephosphate). Catalyzes the second step in that pathway, the hydrolysis of the N-glycosidic bond in hmdUMP, degrading this cytotoxic nucleotide to avoid its genomic integration. This Mus musculus (Mouse) protein is 5-hydroxymethyl-dUMP N-hydrolase.